The following is a 437-amino-acid chain: UDP-N-acetylmuramoylalanine--D-glutamate ligase (437 aa).

115-121 (GSNGKST) is a binding site for ATP.

It belongs to the MurCDEF family.

Its subcellular location is the cytoplasm. It carries out the reaction UDP-N-acetyl-alpha-D-muramoyl-L-alanine + D-glutamate + ATP = UDP-N-acetyl-alpha-D-muramoyl-L-alanyl-D-glutamate + ADP + phosphate + H(+). It participates in cell wall biogenesis; peptidoglycan biosynthesis. Its function is as follows. Cell wall formation. Catalyzes the addition of glutamate to the nucleotide precursor UDP-N-acetylmuramoyl-L-alanine (UMA). This chain is UDP-N-acetylmuramoylalanine--D-glutamate ligase, found in Vibrio parahaemolyticus serotype O3:K6 (strain RIMD 2210633).